The primary structure comprises 94 residues: MKYPKQIRTYCPYCKRHTIHKVERVKRRPRSELSAGQRRFRRVLKGYGGFPRPKPEGREKPVKKLDLRFVCTVCGRAHTRGKGFRVKRFELVEV.

C11, C14, C71, and C74 together coordinate Zn(2+). The C4-type zinc finger occupies 11–74; sequence CPYCKRHTIH…LDLRFVCTVC (64 aa).

This sequence belongs to the eukaryotic ribosomal protein eL42 family. Part of the 50S ribosomal subunit. The cofactor is Zn(2+).

Binds to the 23S rRNA. In Pyrococcus horikoshii (strain ATCC 700860 / DSM 12428 / JCM 9974 / NBRC 100139 / OT-3), this protein is Large ribosomal subunit protein eL42.